Here is a 394-residue protein sequence, read N- to C-terminus: Phosphoglycerate kinase (394 aa).

Residues 21-23, R36, 59-62, R118, and R151 contribute to the substrate site; these read DFN and HLGR. ATP contacts are provided by residues K202, G293, E324, and 350–353; that span reads GGDS.

This sequence belongs to the phosphoglycerate kinase family. As to quaternary structure, monomer.

The protein localises to the cytoplasm. The catalysed reaction is (2R)-3-phosphoglycerate + ATP = (2R)-3-phospho-glyceroyl phosphate + ADP. It participates in carbohydrate degradation; glycolysis; pyruvate from D-glyceraldehyde 3-phosphate: step 2/5. This Exiguobacterium sp. (strain ATCC BAA-1283 / AT1b) protein is Phosphoglycerate kinase.